We begin with the raw amino-acid sequence, 158 residues long: Chromobox protein homolog 7 (158 aa).

The Chromo domain maps to 11–69 (FAVESIRKKRVRKGKVEYLVKWKGWPPKYSTWEPEEHILDPRLVMAYEEKEERDRASGY). The interval 60-127 (KEERDRASGY…WTPTLPSSEV (68 aa)) is disordered. The segment covering 68-78 (GYRKRGPKPRR) has biased composition (basic residues).

Component of a PRC1-like complex. Distinct PRC1-like core complexes are composed of a RING1 subunit (RING1B or RING1A), one of the six PCGF proteins (PCGF1-6), one PHC protein (PHC1-3) and one of the CBX proteins (CBX2, CBX4, CBX6, CBX7 or CBX8). The composition of the PRC1 complex may differ between the PRC1 complex in pluripotent embryonic stem cells containing RNF2, CBX7 and PCGF2, and the PRC1 complex in differentiating cells containing RNF2, CBX2, CBX4 and BMI1. Interacts with RING1. Interacts with RNF2, PHC1 and PCGF2. Interacts (via chromodomain) with histone H3K9Me3 and H3K27me3. Interacts with H3K9Me2 and H4K20Me1. Interacts (via chromodomain) with single-stranded and double-stranded RNA; RNA binding seems to be required for the localization to chromatin. Interacts with PCGF1, PCGF3, PCGF5 and PCGF6. Expressed in embryonic stem cells.

It is found in the nucleus. Its subcellular location is the chromosome. Functionally, component of a Polycomb group (PcG) multiprotein PRC1-like complex, a complex class required to maintain the transcriptionally repressive state of many genes, including Hox genes, throughout development. PcG PRC1 complex acts via chromatin remodeling and modification of histones; it mediates monoubiquitination of histone H2A 'Lys-119', rendering chromatin heritably changed in its expressibility. Promotes histone H3 trimethylation at 'Lys-9' (H3K9me3). Binds to histone H3 trimethylated at 'Lys-9' (H3K9me3) or at 'Lys-27' (H3K27me3). Trimethylation at 'Lys-27' (H3K27me3) is important for chromatin recruitment. May possibly also bind trimethylated lysine residues in other proteins (in vitro). Binds non-coding, single-stranded RNA and double-stranded RNA. Plays a role in the timely repression of differentiation-specific genes in pluripotent embryonic stem cells to maintain the undifferentiated state. Regulator of cellular lifespan by maintaining the repression of CDKN2A, but not by inducing telomerase activity. This Mus musculus (Mouse) protein is Chromobox protein homolog 7 (Cbx7).